The sequence spans 1334 residues: DNA-directed RNA polymerase subunit beta' (1334 aa).

Residues Cys213, Cys284, Cys291, and Cys294 each contribute to the Zn(2+) site. Residues 1299 to 1308 (SSRGSSRFSR) show a composition bias toward low complexity. The interval 1299–1334 (SSRGSSRFSRQPISDRWSEADEEGEEDDFEEDYEEE) is disordered. Residues 1318–1334 (ADEEGEEDDFEEDYEEE) are compositionally biased toward acidic residues.

The protein belongs to the RNA polymerase beta' chain family. RpoC2 subfamily. As to quaternary structure, in cyanobacteria the RNAP catalytic core is composed of 2 alpha, 1 beta, 1 beta', 1 gamma and 1 omega subunit. When a sigma factor is associated with the core the holoenzyme is formed, which can initiate transcription. Zn(2+) is required as a cofactor.

It carries out the reaction RNA(n) + a ribonucleoside 5'-triphosphate = RNA(n+1) + diphosphate. Its function is as follows. DNA-dependent RNA polymerase catalyzes the transcription of DNA into RNA using the four ribonucleoside triphosphates as substrates. This is DNA-directed RNA polymerase subunit beta' from Microcystis aeruginosa (strain NIES-843 / IAM M-2473).